We begin with the raw amino-acid sequence, 748 residues long: Wings apart-like protein homolog 1 (748 aa).

Disordered stretches follow at residues 23–199 (TLAQ…VYAT) and 614–644 (EGGC…RLDR). A compositionally biased stretch (low complexity) spans 35–64 (PSVRSSDSPDVPDTPDVPVNQLSSPPLSLP). Composition is skewed to polar residues over residues 68–79 (SEGNAETLQNLS) and 87–96 (LSQSSTSSLN). Over residues 172 to 182 (ISSSSNRYSSR) the composition is skewed to low complexity. The region spanning 205 to 723 (KPLASGYGSR…KRLYDFTKAT (519 aa)) is the WAPL domain. Residues 616 to 633 (GCGDEEEEEEGGDESSDE) show a composition bias toward acidic residues. Over residues 634 to 644 (DGVRKDGRLDR) the composition is skewed to basic and acidic residues.

Belongs to the WAPL family.

Its subcellular location is the nucleus. Functionally, regulator of meiotic chromosome structure and function, playing a role in sister chromatid cohesion, possibly via antagonizing the coh-3/-4 association with axial elements in nuclei during late prophase, cohesin association with chromatin, DNA double strand break repair and polar body positioning following meiotic divisions during oogenesis. Regulates the morphogenesis and temporal assembly of axial elements to control the organization of meiotic chromosomes in pachytene nuclei and is also involved in meiotic chromosomal remodeling in late pachytene nuclei. Required for the removal of the cohesin component scc-1 from mitotic chromosomes. This chain is Wings apart-like protein homolog 1, found in Caenorhabditis elegans.